The following is a 595-amino-acid chain: Merlin (595 aa).

Position 13 is a phosphoserine (Ser13). The region spanning 22 to 311 is the FERM domain; that stretch reads FTVRIVTMDA…GNHDLFMRRR (290 aa). Ser518 bears the Phosphoserine; by PAK mark.

As to quaternary structure, interacts with NHERF1, HGS and AGAP2. Interacts with LAYN. Interacts with SGSM3. Interacts (via FERM domain) with MPP1. Interacts with WWC1. Interacts with the CUL4A-RBX1-DDB1-VprBP/DCAF1 E3 ubiquitin-protein ligase complex. The unphosphorylated form interacts (via FERM domain) with VPRBP/DCAF1. Interacts (via FERM domain) with NOP53; the interaction is direct. Interacts with SCHIP1; the interaction is direct. Phosphorylation of Ser-518 inhibits nuclear localization by disrupting the intramolecular association of the FERM domain with the C-terminal tail. The dephosphorylation of Ser-518 favors the interaction with NOP53. Post-translationally, ubiquitinated by the CUL4A-RBX1-DDB1-DCAF1/VprBP E3 ubiquitin-protein ligase complex for ubiquitination and subsequent proteasome-dependent degradation. Widely expressed. Isoform 1 and isoform 3 are predominant. Isoform 4, isoform 5 and isoform 6 are expressed moderately. Isoform 8 is found at low frequency. Isoform 7, isoform 9 and isoform 10 are not expressed in adult tissues, with the exception of adult retina expressing isoform 10. Isoform 9 is faintly expressed in fetal brain, heart, lung, skeletal muscle and spleen. Fetal thymus expresses isoforms 1, 7, 9 and 10 at similar levels.

The protein localises to the cell projection. It localises to the filopodium membrane. The protein resides in the ruffle membrane. Its subcellular location is the nucleus. It is found in the cytoplasm. The protein localises to the perinuclear region. It localises to the cytoplasmic granule. The protein resides in the cytoskeleton. Its function is as follows. Probable regulator of the Hippo/SWH (Sav/Wts/Hpo) signaling pathway, a signaling pathway that plays a pivotal role in tumor suppression by restricting proliferation and promoting apoptosis. Along with WWC1 can synergistically induce the phosphorylation of LATS1 and LATS2 and can probably function in the regulation of the Hippo/SWH (Sav/Wts/Hpo) signaling pathway. May act as a membrane stabilizing protein. May inhibit PI3 kinase by binding to AGAP2 and impairing its stimulating activity. Suppresses cell proliferation and tumorigenesis by inhibiting the CUL4A-RBX1-DDB1-VprBP/DCAF1 E3 ubiquitin-protein ligase complex. The sequence is that of Merlin (NF2) from Homo sapiens (Human).